The sequence spans 184 residues: UPF0316 protein BPUM_0594 (184 aa).

Transmembrane regions (helical) follow at residues 9-29, 41-61, and 67-87; these read AFTMVLIILVINIVYVSFSTM, AAAFAGTIEMLIYVIGLSIVL, and IQNVIAYALGYGMGIIVGMKI.

This sequence belongs to the UPF0316 family.

It is found in the cell membrane. This is UPF0316 protein BPUM_0594 from Bacillus pumilus (strain SAFR-032).